We begin with the raw amino-acid sequence, 124 residues long: Small ribosomal subunit protein uS12 (124 aa).

3-methylthioaspartic acid is present on Asp89.

The protein belongs to the universal ribosomal protein uS12 family. As to quaternary structure, part of the 30S ribosomal subunit. Contacts proteins S8 and S17. May interact with IF1 in the 30S initiation complex.

In terms of biological role, with S4 and S5 plays an important role in translational accuracy. Interacts with and stabilizes bases of the 16S rRNA that are involved in tRNA selection in the A site and with the mRNA backbone. Located at the interface of the 30S and 50S subunits, it traverses the body of the 30S subunit contacting proteins on the other side and probably holding the rRNA structure together. The combined cluster of proteins S8, S12 and S17 appears to hold together the shoulder and platform of the 30S subunit. The chain is Small ribosomal subunit protein uS12 from Shewanella loihica (strain ATCC BAA-1088 / PV-4).